We begin with the raw amino-acid sequence, 147 residues long: Hemoglobin subunit beta (147 aa).

Position 2 is an N-acetylvaline (Val-2). The Globin domain occupies 3–147; that stretch reads NLTSDEKTAV…VANALAHKYH (145 aa). At Ser-45 the chain carries Phosphoserine. At Lys-60 the chain carries N6-acetyllysine. His-64 lines the heme b pocket. Lys-83 is modified (N6-acetyllysine). Residue His-93 participates in heme b binding. Cys-94 is modified (S-nitrosocysteine). Lys-145 is modified (N6-acetyllysine).

It belongs to the globin family. Heterotetramer of two alpha chains and two beta chains. In terms of tissue distribution, red blood cells.

Its function is as follows. Involved in oxygen transport from the lung to the various peripheral tissues. This Dasypus novemcinctus (Nine-banded armadillo) protein is Hemoglobin subunit beta (HBB).